The primary structure comprises 1423 residues: DNA-directed RNA polymerase, mitochondrial (1423 aa).

The N-terminal 73 residues, 1–73, are a transit peptide targeting the mitochondrion; that stretch reads MLPRTASATR…RATVGFERHL (73 aa). The interval 266–303 is disordered; sequence NMPDNVDPDTFAQQQQQQQQQQQQQQEQQQQQDTSIDQ. Low complexity predominate over residues 278–297; the sequence is QQQQQQQQQQQQQQEQQQQQ. Active-site residues include aspartate 901 and lysine 970. Residues 1055 to 1064 show a composition bias toward basic and acidic residues; sequence EFERSERSPH. A disordered region spans residues 1055–1087; that stretch reads EFERSERSPHGDGTASGENITLAGNPRKSSAHK. The active site involves aspartate 1180. The disordered stretch occupies residues 1316–1342; sequence VRRGREMDEEGEVDGSEEAVEHEDGMH. Residues 1322–1336 are compositionally biased toward acidic residues; sequence MDEEGEVDGSEEAVE.

Belongs to the phage and mitochondrial RNA polymerase family.

It localises to the mitochondrion. The enzyme catalyses RNA(n) + a ribonucleoside 5'-triphosphate = RNA(n+1) + diphosphate. Functionally, DNA-dependent RNA polymerase catalyzes the transcription of DNA into RNA using the four ribonucleoside triphosphates as substrates. The polypeptide is DNA-directed RNA polymerase, mitochondrial (cyt-5) (Neurospora crassa (strain ATCC 24698 / 74-OR23-1A / CBS 708.71 / DSM 1257 / FGSC 987)).